The primary structure comprises 309 residues: Polyprenal reductase (309 aa).

Residues 1–3 are Cytoplasmic-facing; that stretch reads MFH. A helical transmembrane segment spans residues 4 to 24; the sequence is ILSIVNIIWLLLALCFGAAFC. Residues 25-67 lie on the Lumenal side of the membrane; that stretch reads LNKFSVKLPNRVEHVFQDFIRYGKTKENIKRASWQLVFDLSKR. A helical transmembrane segment spans residues 68 to 88; sequence YFYHFYVVSVMWNGLLLLFSI. Residues 89–114 are Cytoplasmic-facing; that stretch reads RSVVMSEAFPDWIIDVLGSLTGRSRG. The helical transmembrane segment at 115-135 threads the bilayer; it reads AWNEIHLSTLLLQVLLWVHTL. Over 136–150 the chain is Lumenal; that stretch reads RRLLECLFVSVFSDG. A helical membrane pass occupies residues 151–171; the sequence is VINVVQYAFGLSYYIILGLTV. The Cytoplasmic segment spans residues 172–185; the sequence is LCTNDSLPQSESVS. The chain crosses the membrane as a helical span at residues 186–206; the sequence is FFNQLTWYHVVGTLLFFWASF. The Lumenal portion of the chain corresponds to 207–255; it reads LQHQSLSLLAKMRTDSSGKVETLAHKMPCGGWFELVSCPHYLAELLIYA. A helical transmembrane segment spans residues 256–276; the sequence is AMCVCCGCASLTWWMVVLYVL. The Cytoplasmic segment spans residues 277-309; the sequence is CNQALAAQLCHEYYRSKFKTYPHHRKAFIPFVL.

The protein belongs to the steroid 5-alpha reductase family. Polyprenal reductase subfamily.

The protein resides in the endoplasmic reticulum membrane. It catalyses the reaction a di-trans,poly-cis-dolichal + NADP(+) = a di-trans,poly-cis-polyprenal + NADPH + H(+). It carries out the reaction a 3-oxo-5alpha-steroid + NADP(+) = a 3-oxo-Delta(4)-steroid + NADPH + H(+). The catalysed reaction is androst-4-ene-3,17-dione + NADPH + H(+) = 5alpha-androstan-3,17-dione + NADP(+). The enzyme catalyses 17beta-hydroxy-5alpha-androstan-3-one + NADP(+) = testosterone + NADPH + H(+). It participates in protein modification; protein glycosylation. Its function is as follows. Plays a key role in early steps of protein N-linked glycosylation by being involved in the conversion of polyprenol into dolichol. Acts as a polyprenal reductase that mediates the reduction of polyprenal into dolichal in a NADP-dependent mechanism. Dolichols are required for the synthesis of dolichol-linked monosaccharides and the oligosaccharide precursor used for N-glycosylation. Also able to convert testosterone (T) into 5-alpha-dihydrotestosterone (DHT). The sequence is that of Polyprenal reductase (srd5a3) from Danio rerio (Zebrafish).